Here is a 323-residue protein sequence, read N- to C-terminus: DNA-directed RNA polymerase subunit alpha (323 aa).

Positions 1–233 are alpha N-terminal domain (alpha-NTD); it reads MGQEKVTVST…DLFIPFFHAE (233 aa). Residues 264 to 323 form an alpha C-terminal domain (alpha-CTD) region; it reads IALKYIYIDQSELPPRVYNCLKRSNINTFLELLNNSQEELMKIQDFRIEDVKHILDVLEI.

This sequence belongs to the RNA polymerase alpha chain family. As to quaternary structure, in plastids the minimal PEP RNA polymerase catalytic core is composed of four subunits: alpha, beta, beta', and beta''. When a (nuclear-encoded) sigma factor is associated with the core the holoenzyme is formed, which can initiate transcription.

The protein resides in the plastid. The protein localises to the chloroplast. The enzyme catalyses RNA(n) + a ribonucleoside 5'-triphosphate = RNA(n+1) + diphosphate. In terms of biological role, DNA-dependent RNA polymerase catalyzes the transcription of DNA into RNA using the four ribonucleoside triphosphates as substrates. This Morus indica (Mulberry) protein is DNA-directed RNA polymerase subunit alpha.